The primary structure comprises 94 residues: Co-chaperonin GroES (94 aa).

This sequence belongs to the GroES chaperonin family. Heptamer of 7 subunits arranged in a ring. Interacts with the chaperonin GroEL.

The protein localises to the cytoplasm. Together with the chaperonin GroEL, plays an essential role in assisting protein folding. The GroEL-GroES system forms a nano-cage that allows encapsulation of the non-native substrate proteins and provides a physical environment optimized to promote and accelerate protein folding. GroES binds to the apical surface of the GroEL ring, thereby capping the opening of the GroEL channel. In Bacillus pumilus (strain SAFR-032), this protein is Co-chaperonin GroES.